A 1728-amino-acid chain; its full sequence is Nebulin-related-anchoring protein (1728 aa).

The LIM zinc-binding domain maps to 4–64 (QACSRCGYGV…HAHNPKNNTF (61 aa)). Nebulin repeat units lie at residues 173-200 (TPAYQRAKAANQLASQVQYKRGHDERVS), 201-235 (TFTPVADTPELLRAKAGGQLQNDVRYTEDGGQQRG), 244-271 (TPAYQIAKRATELASDVRYHQQYHREMK), 313-340 (TPAYQNAKKANELVSDIKYRQDFHKMKG), 345-379 (HSLAAQDNLVLKRAQSVSKLVSEVEYKKGLENSKG), 386-414 (ETPQFRNVSKISKFTSDNKYKENYQTQLR), 416-450 (HYDGVGMDRRMLHALKVGSLASNVAYKADYKHDVV), 484-518 (KFSSVTNTPQIVQAKINAQQLSHVNYRADYERNKL), 519-553 (NYTLPQDAPQLLKAKANAELFSEVKYKEGWQKTKG), 555-589 (GFEMKLDAMSLLAAKASGELASSVKYKEEYEKMKG), 599-623 (LLHSLQVAKMSSEVEYKKGFEESKT), 624-658 (HFNLPMDMVNLRHAKKAQALASDLDYRKKLHDYTV), 659-689 (LPEDMKTQWAKKAYGLQSELQYKADLAWMRG), 699-721 (NLEQAKKAGQLISEKNYRQRVDE), 723-757 (KFTSVADSSQMEHAKKSQGLQNAVAYKAGNEQSVH), 758-792 (QYTISKDEPLFLRARANAAQLSETLYKSSWEKQKA), 794-828 (GFELRLDSLAFLTAKAKRDLASEVKYKEDYERSRG), 841-866 (QMSHSLQMSKLQSDLEYKKGFEDTRS), 867-893 (QCHISLDMVHLVHARQAQHLATDVGYR), 898-932 (CFTALPTDMKVEWAKKAYGLQSDNQYRADMKWMKG), 943-960 (VEQAKKAGELISEKKYRQ), 966-1000 (KFTSIKDTPEMVQARISYTQAVDRLYREQGENVKH), 1001-1035 (HYTQTADLPEVLLAKLNAMNISETRYKESWSRLRD), 1037-1071 (GYKLRLDALPFQAAKASSEVISDYKYKEAFERMKG), 1075-1109 (GSRSLEDDLSLAHSVHATSLQSDVNYKKGFEHAKA), 1110-1136 (HFHLPLDMVTLVHAKKAQTLASDQDYR), 1141-1175 (QHTVLAEDLRLSCAKKAHKLQSENLYRSDLNFMRG), 1180-1203 (VPGTLEIEGRKKASELISESKYRQ), 1209-1243 (KYTAVTDTPNLLHAKYSNQITNERLYKAAGEDARH), 1244-1278 (QYTMTLGLPEFIRAKTNAANLSEAKYKEAWHNLRA), 1280-1314 (GYKLTIDALPFQAARASGDIASDFLYRHEFVKERG), 1318-1352 (GVRNVSDDPRLLHCLRMGQLQSENQYRKEAASSQA), 1353-1379 (QCHLPMDMMYLVHARKAQALASDHDYR), 1384-1418 (EFTALPEDLKMAWAKKAHALQSEFRYKADLMGMKG), 1425-1446 (QSPQIESAKKAGDLISETKYRK), 1452-1478 (KFTTVVDSPDLIHAKESYMHCNERLYR), 1487-1521 (RYTPIPDHPDFTRARMNAMHLSDKVYRNAWEQSRA), 1523-1557 (GYDFRLDAIPFQTARVSRDIASDFRYKEAFLRDRG), 1561-1595 (GYRSISDDPRTTHFLRVGRLQSDNEYRKAFAKGRS), 1596-1630 (QFHSRADQPGFLQAKRSQQLASDVLYRQPLPQHTS), and 1637-1661 (LKHARKAHQLQSDVKYKSDLNLTRG). Residue threonine 203 is modified to Phosphothreonine. Serine 1078 is subject to Phosphoserine.

In terms of assembly, interacts with actin, alpha-actinin, KLHL41, TLN1 and VCL. Interacts with CSRP3. As to expression, expressed in cardiac and skeletal muscle. Not detected in kidney, spleen, liver, brain, lung, stomach or uterus.

Its function is as follows. May be involved in anchoring the terminal actin filaments in the myofibril to the membrane and in transmitting tension from the myofibrils to the extracellular matrix. This is Nebulin-related-anchoring protein from Mus musculus (Mouse).